Here is a 135-residue protein sequence, read N- to C-terminus: ATP synthase epsilon chain (135 aa).

It belongs to the ATPase epsilon chain family. As to quaternary structure, F-type ATPases have 2 components, CF(1) - the catalytic core - and CF(0) - the membrane proton channel. CF(1) has five subunits: alpha(3), beta(3), gamma(1), delta(1), epsilon(1). CF(0) has three main subunits: a, b and c.

The protein localises to the cell inner membrane. Functionally, produces ATP from ADP in the presence of a proton gradient across the membrane. This Chelativorans sp. (strain BNC1) protein is ATP synthase epsilon chain.